Consider the following 43-residue polypeptide: Potassium channel toxin gamma-KTx 3.2 (43 aa).

4 disulfide bridges follow: cysteine 5–cysteine 23, cysteine 11–cysteine 34, cysteine 20–cysteine 39, and cysteine 24–cysteine 41.

It belongs to the ergtoxin family. Gamma-KTx 3 subfamily. Expressed by the venom gland.

It is found in the secreted. Blocks Kv11/ERG potassium channels. This Centruroides elegans (Bark scorpion) protein is Potassium channel toxin gamma-KTx 3.2.